A 782-amino-acid chain; its full sequence is Cysteine-rich protein 2-binding protein (782 aa).

Ser4 bears the Phosphoserine mark. The segment at 13–33 (RHDDEATRTSTSEGLEEGEVE) is disordered. At Lys231 the chain carries N6-acetyllysine. Residues 251–282 (PVESAMELKEKRSRTQEAKDIRRAQKEAAGFL) are disordered. Over residues 256–276 (MELKEKRSRTQEAKDIRRAQK) the composition is skewed to basic and acidic residues. Phosphoserine is present on Ser285. Lys292 is modified (N6-acetyllysine). Positions 315-335 (LSSSDRTPLTSPSPSPSLDFS) are enriched in low complexity. 2 disordered regions span residues 315–346 (LSSSDRTPLTSPSPSPSLDFSAPGTPASHSAT) and 400–460 (VRKK…EPRY). 2 stretches are compositionally biased toward basic and acidic residues: residues 405–426 (RGPEQIKQEVESEEEKPDRMDI) and 446–459 (KPQLEKDTKPKEPR). A Phosphoserine modification is found at Ser416. Positions 638-782 (LDYCYVRPNH…KHAFFLRLRR (145 aa)) constitute an N-acetyltransferase domain.

In terms of assembly, interacts with the LIM 1 domain of CSRP2. Component of the ADA2A-containing complex (ATAC), composed of CSRP2BP, KAT2A, TADA2L, TADA3L, ZZ3, MBIP, WDR5, YEATS2, CCDC101 and DR1. In the complex, it probably interacts directly with KAT2A, MBIP and WDR5. As to expression, expressed in skeletal muscle, heart, lung, placenta, brain, liver, pancreas and kidney. High expression in skeletal muscle and heart. Lower expression in lung.

It is found in the nucleus. Its subcellular location is the cytoplasm. Component of the ATAC complex, a complex with histone acetyltransferase activity on histones H3 and H4. May function as a scaffold for the ATAC complex to promote ATAC complex stability. Has also weak histone acetyltransferase activity toward histone H4. Required for the normal progression through G1 and G2/M phases of the cell cycle. The protein is Cysteine-rich protein 2-binding protein of Homo sapiens (Human).